The following is a 375-amino-acid chain: Prophage integrase IntE (375 aa).

A Core-binding (CB) domain is found at I82–Q167. The 187-residue stretch at I189–L375 folds into the Tyr recombinase domain. Active-site residues include R226, K249, H330, R333, and H353. Residues L350–L375 are disordered. Y362 acts as the O-(3'-phospho-DNA)-tyrosine intermediate in catalysis.

This sequence belongs to the 'phage' integrase family.

In terms of biological role, integrase from the cryptic lambdoid prophage e14. Integrase is necessary for integration of the phage into the host genome by site-specific recombination. In conjunction with excisionase, integrase is also necessary for excision of the prophage from the host genome. This chain is Prophage integrase IntE (intE), found in Escherichia coli (strain K12).